Reading from the N-terminus, the 221-residue chain is uncharacterized protein (221 aa).

Residues 33-167 (RPAKSAVMLY…VSPGANLELL (135 aa)) form the MOSC domain.

This is an uncharacterized protein from Bacillus subtilis (strain 168).